The primary structure comprises 2462 residues: MASFLVGFLLPSLLLAAALINWSVISFLDLIAFLLVHYIAPEIGYRFQRRHWLLWPIFIFSFAVFLAQVVYLVIWAALGQDWDTPDTGWMRVIGFMILKSWRNPTVMYFLALQLLTSLVALADIYSSRFGFARWRDTWWSHFSGIFEHLGSHLRVASCLLLPAVQLAVGICNPSWVSLPFFIGSCAGLVDWSLTSNVSGLFRWWRVLYIYAGFNIVLLYLYQLPINFSDMIRWIASFIGLFRISLETEGPDICSGLFLVLFYIMLSYVRSDLEDMDFIMSTSENNLAERLLPPKYSFFIRESRAGVRHTNVLLRGAVFKTFSINFFTYGFPVSLFALSFWSFHFASLCAFGLLAYVGYIIYAFPSLFQLHRLNGLLLVFILLWAVSTYIFNVAFSFLNTKVGKFGLGMLVALGNLVNNSVFLYLSEESSRSSNERSYVEADEETKVLVVATIAWGLRKCSRAIMLALIFLIAMKPGFFHAVYVIFFLMYLLSHNINRKIRKSLILLCEVHFALLYILEIDLVSNSLKQEGSASREVLFQLGLLRSESSWDFLEIALLACFCAIHNHGFEVLFSFSAIVRHTPSPPIGFSILKAGLNKSVLLSVYSSPSSSYSQDNTTYERHIASFLSAIGQKFLSMYRSCGTYIAFITILISVYLVKPNYVSFGYIFLLLLWITGRQLFEETKRRLWFPLKAYAVLVFMFIYCLSSFVSLQLWLSGFIDLYFYLGYNSKAPLLDNVWESLAVLIVMQLYSYERRQSGHYIPGQSSLLHPGVFGFFERFLAWHGQKILFAALFYASLSPISVFGFVYLLGLVICTTFPKSSSIPSKSFLIYTGFLVSAEYLFQLWGMQAQMFPGQKYAELSFYLGLRVYEPGFWGIESGLRGKVLVVAACTLQYNVFRWLERTSGLTVIKGKYEEPCPLFVSAEDTTASVSSSNGENPSSTDHASISMKQGEATSNSWPFFSPRGNQGAGFLHPKTGGSESGSSRKFSFGHFWGSIKESHRWNRRRILALKKERFETQKNLLKIYLKFWIENMFNLYGLEINMIALLLASFALLNAISMVYIALLAACVLLRRRVIQKLWPVVVFLFASILAIEYVATWNSFLPSDQAPSETSVHCHDCWSIAALYFKFCRECWLGVRVDDPRTLISYFVVFMLACFKLRADHISSFSESSTYHQMKSQRKNSFVWRDLSFETKSMWTVLDYLRLYCYVHLLDVVLILILITGTLEYDILHLGYLAFALVFARMRLEILKKKNKIFRFLRVYNFVLIIFSLAYQSPFVGNFNDGKCETVDYIYEVIGFYKYDYGFRITARSALVEIIIFMLVSLQSYMFSSQEFDYVSRYLEAEQIGAIVREQEKKAARKTEQLQQIREAEEKKRQRNLQVEKMKSEMLNLRVQLHRMNSDSNFGVASPRTEGLRRRKSPYLIPDSGAASPEIDGVVHRKEEQPIDEDSQYPFEAHEFPVSTTPEALDSPEYSFGASPCEITEVQQDLDVMSMERERKQKSEGKENPLISAVQLIGDGVSQVQFIGNQAVNNLVNFLNISPENSDTNEQSSVDDEVYDEMESQKRKHTPFERSTSLQSDRSSDGTSFQIGRIFRHIWSRMQSNNDIVCYCCFIIAFLWNFSLLSMVYLAALFLYALCVHTGPTHIFWVIMLMYTEIYILLQYLYQIIIQHCGLSIDAPLLHELGFPTQRIKSSFVVSSLPLFLIYIFTLIQSSITVKDGDWVPSADFTSRRNARGSQKDLTRIRLSQRILDVFKKLRDSAKLVIRSIYRYWISLTRGAESPPYFVQVTMDVHMWPEDGIQPERVECRMNQLLRLVHNERCEKGNPDLCPYSSRVHVQSIERSTETPNEALVVLEVEYASPTNGCSSAEWYKSLTPASDVAKEIRKAQHSGLGEGTGFPYPILSVIGGGKRDTDLYAYIFGADLIVFFLVAIFYQSVIKNKSEFIDVYQLEDQFPFDFVIILMVIFFLIVVDRVIYLCSFATGKVVYYLFSLILFTYAVTEYAWSIYPTQQHAAGLALRIIFLAKAMSLALQAIQIRYGLPHKSTLYRQFLTSEVSRINYYGYRLYRALPFLYELRCVLDWSCTATSLTMYDWLKLEDVNASLYLVKCDTVLNRATHKHGEKQTKMTKCCNGICLFFILLCVIWAPMLMYSSGNPTNIANPIKDASVQIDLKTVGGKLTLYQTTLCERISGDNIDLGLDLGSQSFLPTYNKNDIQLICCQADASVLWLVPDTVVTRFIQSLDWDTDMDITFTWVLNRDRPKGKETVKYERSVDPLDLPKRSDIQMVLNGSMDGFRVHNLYPKFFRVTGSGDVRSFEDQTDEVSADILINHANFKWWWSFHNLKASENISACEGMDGPVAIIMSEETPPQGFLGDTLSKFSIWGLYITFVLAVGRFIRLQCSDLRMRIPYENLPSCDRLIAICEDLYAARAEGELGVEEVLYWTLVKIYRSPHMLLEYTKLDYDA.

The next 19 membrane-spanning stretches (helical) occupy residues 5–25 (LVGFLLPSLLLAAALINWSVI), 27–47 (FLDLIAFLLVHYIAPEIGYRF), 57–77 (IFIFSFAVFLAQVVYLVIWAA), 105–125 (TVMYFLALQLLTSLVALADIY), 163–183 (AVQLAVGICNPSWVSLPFFIG), 207–227 (LYIYAGFNIVLLYLYQLPINF), 248–268 (EGPDICSGLFLVLFYIMLSYV), 325–345 (FFTYGFPVSLFALSFWSFHFA), 347–367 (LCAFGLLAYVGYIIYAFPSLF), 374–394 (GLLLVFILLWAVSTYIFNVAF), 404–424 (FGLGMLVALGNLVNNSVFLYL), 467–487 (LIFLIAMKPGFFHAVYVIFFL), 502–522 (SLILLCEVHFALLYILEIDLV), 554–574 (IALLACFCAIHNHGFEVLFSF), 653–673 (VYLVKPNYVSFGYIFLLLLWI), 694–714 (AVLVFMFIYCLSSFVSLQLWL), 730–750 (APLLDNVWESLAVLIVMQLYS), 792–812 (FYASLSPISVFGFVYLLGLVI), and 826–846 (SFLIYTGFLVSAEYLFQLWGM). Residues 927 to 947 (ASVSSSNGENPSSTDHASISM) are disordered. Positions 928-939 (SVSSSNGENPSS) are enriched in low complexity. 8 helical membrane passes run 1027–1047 (FWIENMFNLYGLEINMIALLL), 1050–1070 (FALLNAISMVYIALLAACVLL), 1078–1098 (LWPVVVFLFASILAIEYVATW), 1143–1160 (TLISYFVVFMLACFKLRA), 1204–1224 (LYCYVHLLDVVLILILITGTL), 1228–1248 (ILHLGYLAFALVFARMRLEIL), 1260–1280 (VYNFVLIIFSLAYQSPFVGNF), and 1310–1330 (SALVEIIIFMLVSLQSYMFSS). Residues 1347-1400 (AIVREQEKKAARKTEQLQQIREAEEKKRQRNLQVEKMKSEMLNLRVQLHRMNSD) adopt a coiled-coil conformation. The interval 1543–1583 (SDTNEQSSVDDEVYDEMESQKRKHTPFERSTSLQSDRSSDG) is disordered. A compositionally biased stretch (acidic residues) spans 1550–1559 (SVDDEVYDEM). The segment covering 1570–1583 (ERSTSLQSDRSSDG) has biased composition (polar residues). The next 8 helical transmembrane spans lie at 1611 to 1631 (FIIAFLWNFSLLSMVYLAALF), 1647 to 1667 (VIMLMYTEIYILLQYLYQIII), 1916 to 1936 (YIFGADLIVFFLVAIFYQSVI), 1956 to 1976 (FVIILMVIFFLIVVDRVIYLC), 1984 to 2004 (VYYLFSLILFTYAVTEYAWSI), 2012 to 2032 (AGLALRIIFLAKAMSLALQAI), 2130 to 2150 (GICLFFILLCVIWAPMLMYSS), and 2369 to 2389 (FLGDTLSKFSIWGLYITFVLA).

It belongs to the PIEZO (TC 1.A.75) family.

It localises to the membrane. In terms of biological role, pore-forming subunit of a mechanosensitive non-specific cation channel, that conducts both sodium and potassium ions. The polypeptide is Piezo-type mechanosensitive ion channel homolog (Arabidopsis thaliana (Mouse-ear cress)).